Here is a 261-residue protein sequence, read N- to C-terminus: MNKTIIAERFSKAISTYPREANVQRQIANKMIRLLQKHIPSPCPKVIEFGCGTGIYSRMLLRTLRPEELLLNDLCPEMRYCCEDLLREKQVSFLSGDAETISFPDKSTLITSCSALQWFDSPEEFFKRCNTLLHSQGYFAFSTFGKKNMKEIRELTGKGLPYRSREELEAALSLHFDILYSEEELIPLSFEDPMKVLYHLKQTGVNGLSAQSSLYPKHEKQTWTRRDLQHFCERYTQEFTQGTSVSLTYHPIYIIAKKKKV.

Belongs to the methyltransferase superfamily.

The catalysed reaction is malonyl-[ACP] + S-adenosyl-L-methionine = malonyl-[ACP] methyl ester + S-adenosyl-L-homocysteine. It participates in cofactor biosynthesis; biotin biosynthesis. Functionally, converts the free carboxyl group of a malonyl-thioester to its methyl ester by transfer of a methyl group from S-adenosyl-L-methionine (SAM). It allows to synthesize pimeloyl-ACP via the fatty acid synthetic pathway. This chain is Malonyl-[acyl-carrier protein] O-methyltransferase, found in Bacteroides thetaiotaomicron (strain ATCC 29148 / DSM 2079 / JCM 5827 / CCUG 10774 / NCTC 10582 / VPI-5482 / E50).